Reading from the N-terminus, the 117-residue chain is Protein P16 (117 aa).

The chain crosses the membrane as a helical span at residues 7 to 24 (LYWVGGGLVLILIWLWFR).

It localises to the virion membrane. Protein of the infection vertex complex, which increases the vertex stability. Anchors the vertex structure to the viral membrane. Essential for viral infectivity. In Enterobacteria phage PRD1 (Bacteriophage PRD1), this protein is Protein P16 (XVI).